A 601-amino-acid chain; its full sequence is Leucine zipper putative tumor suppressor 1 (601 aa).

The N-myristoyl glycine moiety is linked to residue glycine 2. The segment at 135–190 (GAILHSSPESTNHQLHPMPPDKPKEQELKPGLCSGALSDSGRNSMSSLPTHSTTSS) is disordered. Residues 153-162 (PPDKPKEQEL) show a composition bias toward basic and acidic residues. The span at 174–190 (SGRNSMSSLPTHSTTSS) shows a compositional bias: polar residues. A coiled-coil region spans residues 255-573 (PLSTDECTIQ…RLEKALQQLA (319 aa)).

Belongs to the LZTS family. Binds EEF1G, TLK2 and CDK1. In terms of processing, phosphorylated on serine residues. Hyperphosphorylated by the cAMP-dependent kinase PKA during cell-cycle progression. Highly expressed in brain, in particular in cortex, the CA2 region of the hippocampus, olfactory bulb, striatum and pons. Not detectable in the other tissues tested.

It localises to the cytoplasm. Its subcellular location is the cell membrane. It is found in the cell projection. The protein localises to the dendritic spine. The protein resides in the postsynaptic density. It localises to the synapse. Its function is as follows. Involved in the regulation of cell growth. May stabilize the active CDC2-cyclin B1 complex and thereby contribute to the regulation of the cell cycle and the prevention of uncontrolled cell proliferation. May act as tumor suppressor. In Rattus norvegicus (Rat), this protein is Leucine zipper putative tumor suppressor 1 (Lzts1).